Reading from the N-terminus, the 662-residue chain is Probable protein phosphatase 2C 4 (662 aa).

Position 153 is a phosphoserine (serine 153). The region spanning 249-653 (DVSLENQNLQ…DDVSIVVISL (405 aa)) is the PPM-type phosphatase domain. Mn(2+) contacts are provided by aspartate 286, glycine 287, aspartate 581, and aspartate 644.

This sequence belongs to the PP2C family. Mg(2+) serves as cofactor. Mn(2+) is required as a cofactor. In terms of tissue distribution, expressed in seedlings, roots, leaves, stems, young inflorescences, flowers and siliques.

Its subcellular location is the nucleus. It catalyses the reaction O-phospho-L-seryl-[protein] + H2O = L-seryl-[protein] + phosphate. The catalysed reaction is O-phospho-L-threonyl-[protein] + H2O = L-threonyl-[protein] + phosphate. Functionally, involved in leaf development regulation. The protein is Probable protein phosphatase 2C 4 (PLL5) of Arabidopsis thaliana (Mouse-ear cress).